The following is a 752-amino-acid chain: Photosystem I P700 chlorophyll a apoprotein A1 (752 aa).

The next 8 helical transmembrane spans lie at 73–96 (IFSA…FHGA), 159–182 (LYWT…FHYH), 198–222 (MNHH…HIAL), 294–312 (IAHH…GHMY), 349–372 (WHAQ…HHMY), 388–414 (LSLF…IFMV), 436–458 (AIIS…FYIH), and 533–551 (FMVH…LILL). The [4Fe-4S] cluster site is built by Cys-575 and Cys-584. A run of 2 helical transmembrane segments spans residues 591–612 (HVFL…HFSW) and 666–688 (SSAY…MFLF). Chlorophyll a' is bound at residue His-677. Met-685 and Tyr-693 together coordinate chlorophyll a. Trp-694 is a binding site for phylloquinone. Residues 726 to 746 (AVGLAHYLLGGIGTTWAFFLA) traverse the membrane as a helical segment.

It belongs to the PsaA/PsaB family. The PsaA/B heterodimer binds the P700 chlorophyll special pair and subsequent electron acceptors. PSI consists of a core antenna complex that captures photons, and an electron transfer chain that converts photonic excitation into a charge separation. The eukaryotic PSI reaction center is composed of at least 11 subunits. P700 is a chlorophyll a/chlorophyll a' dimer, A0 is one or more chlorophyll a, A1 is one or both phylloquinones and FX is a shared 4Fe-4S iron-sulfur center. serves as cofactor.

Its subcellular location is the plastid. It localises to the chloroplast thylakoid membrane. The catalysed reaction is reduced [plastocyanin] + hnu + oxidized [2Fe-2S]-[ferredoxin] = oxidized [plastocyanin] + reduced [2Fe-2S]-[ferredoxin]. PsaA and PsaB bind P700, the primary electron donor of photosystem I (PSI), as well as the electron acceptors A0, A1 and FX. PSI is a plastocyanin/cytochrome c6-ferredoxin oxidoreductase, converting photonic excitation into a charge separation, which transfers an electron from the donor P700 chlorophyll pair to the spectroscopically characterized acceptors A0, A1, FX, FA and FB in turn. Oxidized P700 is reduced on the lumenal side of the thylakoid membrane by plastocyanin or cytochrome c6. The chain is Photosystem I P700 chlorophyll a apoprotein A1 from Thalassiosira pseudonana (Marine diatom).